Here is a 433-residue protein sequence, read N- to C-terminus: Serine hydroxymethyltransferase (433 aa).

(6S)-5,6,7,8-tetrahydrofolate is bound at residue 121-123 (AHV). N6-(pyridoxal phosphate)lysine is present on K227. Residue E243 participates in (6S)-5,6,7,8-tetrahydrofolate binding.

Belongs to the SHMT family. As to quaternary structure, homodimer. Pyridoxal 5'-phosphate is required as a cofactor.

The protein resides in the cytoplasm. The protein operates within amino-acid biosynthesis; glycine biosynthesis; glycine from L-serine: step 1/1. Its function is as follows. Catalyzes the reversible interconversion of serine and glycine with a modified folate serving as the one-carbon carrier. Also exhibits a pteridine-independent aldolase activity toward beta-hydroxyamino acids, producing glycine and aldehydes, via a retro-aldol mechanism. This Saccharolobus islandicus (strain Y.G.57.14 / Yellowstone #1) (Sulfolobus islandicus) protein is Serine hydroxymethyltransferase.